The following is a 449-amino-acid chain: MAQVYSQEVYVQYLKRYGFVFQSSELYNGLANSWDFGPLGAVLKQQIKTALYNFFIKNKRDVLLIDTPIILNEQIWKASGHLANFTDALVDCKSCKLRFRVDHLDEQIKSATQWNPKQVNCPNCKANNWSEVRDFNLLFQTEIGVVNSEKRLVYLRPETAQGIFINFKQLLQLKKRPLPFGVAQFGKSFRNEVTPGNFLFRVREFEQFEMEWFCNPQASLSVFESQQQAIAHFLFKVLQLNPALVKQYEYDKNELAHYANKTVDFLFQFPHGLRELWGLADRGTFDLEQHQKYAKKPLDFFDGENNEHFIPAVVEPSVGIERLFYALIVSSYQQEQLEGEMREVLRLPFHLCPEQIVVLPLVNKLKETAQTLFEALSQTHWRIGFESAGSIGKRYRKADAIGTKFAITFDFESLEDQAVTIRERDSLKQVRVPIKELKAWFAQHDDQSH.

Residues arginine 100 and glutamate 158 each coordinate substrate. Residues 190–192 (RNE), 200–205 (FRVREF), 275–276 (EL), and 319–322 (GIER) each bind ATP. A substrate-binding site is contributed by 205-209 (FEQFE). 315-319 (EPSVG) provides a ligand contact to substrate.

It belongs to the class-II aminoacyl-tRNA synthetase family. Homodimer.

Its subcellular location is the cytoplasm. The enzyme catalyses tRNA(Gly) + glycine + ATP = glycyl-tRNA(Gly) + AMP + diphosphate. Functionally, catalyzes the attachment of glycine to tRNA(Gly). The sequence is that of Glycine--tRNA ligase from Mycoplasma pneumoniae (strain ATCC 29342 / M129 / Subtype 1) (Mycoplasmoides pneumoniae).